The chain runs to 102 residues: MAKQKVRIRLKAYDHKILDQSARQIVEAAERTGALVAGPVPLPTKIEKYSVIRSPFIDKDSQEQFEIRTHKRLIDVLDPSQQTINALMKLNLPAGVDIEIKL.

Belongs to the universal ribosomal protein uS10 family. In terms of assembly, part of the 30S ribosomal subunit.

In terms of biological role, involved in the binding of tRNA to the ribosomes. This is Small ribosomal subunit protein uS10 from Roseiflexus castenholzii (strain DSM 13941 / HLO8).